We begin with the raw amino-acid sequence, 140 residues long: L-fucose mutarotase (140 aa).

Catalysis depends on histidine 22, which acts as the Proton donor. Substrate is bound by residues aspartate 30, arginine 107, and 129–131 (YGN).

Belongs to the RbsD / FucU family. FucU mutarotase subfamily. As to quaternary structure, homodecamer.

It is found in the cytoplasm. It carries out the reaction alpha-L-fucose = beta-L-fucose. It functions in the pathway carbohydrate metabolism; L-fucose metabolism. Involved in the anomeric conversion of L-fucose. This is L-fucose mutarotase from Salmonella paratyphi B (strain ATCC BAA-1250 / SPB7).